We begin with the raw amino-acid sequence, 426 residues long: Cuticle-degrading serine protease (426 aa).

A signal peptide spans 1–21; that stretch reads MLTNGLISLLAIAGLATNAFA. A propeptide spanning residues 22–123 is cleaved from the precursor; the sequence is GPIRKVSNAG…VEQDTVVTTY (102 aa). Residues 39-122 form the Inhibitor I9 domain; that stretch reads KYIVVLKKGL…YVEQDTVVTT (84 aa). The Peptidase S8 domain occupies 130–426; the sequence is TWGLDRISHE…TNHQVTIVAS (297 aa). Asp164 (charge relay system) is an active-site residue. N-linked (GlcNAc...) asparagine glycosylation is present at Asn178. Catalysis depends on His200, which acts as the Charge relay system. Asn252 carries N-linked (GlcNAc...) asparagine glycosylation. Ser353 functions as the Charge relay system in the catalytic mechanism.

It belongs to the peptidase S8 family.

The protein localises to the secreted. Its activity is regulated as follows. Inhibited by PMSF, SSI, the peptide Phe-Val and by Phe, but not by EDTA. Its function is as follows. Hydrolyzes gelatin, casein, the chromogenic substrate azocoll and the cuticle of the nematode P.redivivus. Immobilizes P.redivivus. This Orbilia oligospora (Nematode-trapping fungus) protein is Cuticle-degrading serine protease.